The following is a 219-amino-acid chain: Ribose-5-phosphate isomerase A (219 aa).

Substrate contacts are provided by residues 28–31 (TGST), 81–84 (DGAD), and 94–97 (KGGG). The active-site Proton acceptor is the E103. K121 is a substrate binding site.

It belongs to the ribose 5-phosphate isomerase family. As to quaternary structure, homodimer.

The enzyme catalyses aldehydo-D-ribose 5-phosphate = D-ribulose 5-phosphate. It functions in the pathway carbohydrate degradation; pentose phosphate pathway; D-ribose 5-phosphate from D-ribulose 5-phosphate (non-oxidative stage): step 1/1. Functionally, catalyzes the reversible conversion of ribose-5-phosphate to ribulose 5-phosphate. This chain is Ribose-5-phosphate isomerase A, found in Escherichia fergusonii (strain ATCC 35469 / DSM 13698 / CCUG 18766 / IAM 14443 / JCM 21226 / LMG 7866 / NBRC 102419 / NCTC 12128 / CDC 0568-73).